A 201-amino-acid polypeptide reads, in one-letter code: MQTSPLLTQLMEALRCLPGVGPKSAQRMAFTLLQRDRSGGMRLAQALTRAMSEIGHCADCRTFTEQEVCNICSNPRRQENGQICVVESPADIYAIEQTGQFSGRYFVLMGHLSPLDGIGPDDIGLDRLEQRLAEEKITEVILATNPTVEGEATANYIAELCAQYDVEASRIAHGVPVGGELEMVDGTTLSHSLAGRHKIRF.

Residues Cys-57–Cys-72 form a C4-type zinc finger. The Toprim domain maps to Gly-81 to Pro-176.

This sequence belongs to the RecR family.

In terms of biological role, may play a role in DNA repair. It seems to be involved in an RecBC-independent recombinational process of DNA repair. It may act with RecF and RecO. The polypeptide is Recombination protein RecR (Shigella boydii serotype 18 (strain CDC 3083-94 / BS512)).